The sequence spans 409 residues: Histone deacetylase 7 (409 aa).

Residues 11 to 324 are histone deacetylase; sequence RVSYFYEPMI…WCYETAIAVG (314 aa). The active-site Proton donor/acceptor is H148. Residue D267 coordinates Zn(2+). A disordered region spans residues 383-409; sequence PFQDTPSSSQATEAAEVDMEKRNDPRI. The segment covering 384–394 has biased composition (polar residues); the sequence is FQDTPSSSQAT. Over residues 400–409 the composition is skewed to basic and acidic residues; sequence DMEKRNDPRI.

The protein belongs to the histone deacetylase family. HD type 1 subfamily. It depends on Zn(2+) as a cofactor. As to expression, low expression in flowers.

The protein localises to the nucleus. The enzyme catalyses N(6)-acetyl-L-lysyl-[histone] + H2O = L-lysyl-[histone] + acetate. Functionally, responsible for the deacetylation of lysine residues on the N-terminal part of the core histones (H2A, H2B, H3 and H4). Histone deacetylation gives a tag for epigenetic repression and plays an important role in transcriptional regulation, cell cycle progression and developmental events. May be involved in flowering induction. Histone deacetylases act via the formation of large multiprotein complexes. This is Histone deacetylase 7 (HDA7) from Arabidopsis thaliana (Mouse-ear cress).